Consider the following 536-residue polypeptide: Vacuolar segregation protein pep7 (536 aa).

Residues 1-31 are disordered; it reads MQNGKRRIGVRISSNLSNHSGTNLSTSAQSD. Over residues 12-31 the composition is skewed to polar residues; the sequence is ISSNLSNHSGTNLSTSAQSD. A C2H2-type zinc finger spans residues 39–62; that stretch reads TECPICGLELPNLSALNDHLDVTH. Residues 136 to 201 form an FYVE-type 1; degenerate zinc finger; the sequence is PDMVCHDPMC…VCRECYEGRP (66 aa). Zn(2+) contacts are provided by cysteine 158, cysteine 161, cysteine 193, cysteine 196, cysteine 281, cysteine 284, cysteine 297, cysteine 300, cysteine 305, cysteine 308, cysteine 324, and cysteine 327. The FYVE-type 2 zinc finger occupies 275 to 332; that stretch reads DSVVQICPECNNSFTLTRRRRHCRLCGRVICRFCVLEISLPQHPQPLLICMSCNQNYF.

Its function is as follows. Required for vacuole segregation and vacuole protein sorting. Possibly part of a complex which tethers the vacuole membrane to microtubules, either directly or via kinesin or dynein-like motor proteins. Probably functions in several interorganelle traffic pathways. This chain is Vacuolar segregation protein pep7 (pep7), found in Schizosaccharomyces pombe (strain 972 / ATCC 24843) (Fission yeast).